The chain runs to 2517 residues: MKPMKKACTGLSGPGSGSKSPPATRAKALRRRGAGEGDKPEEEDDEAQQPQPQSGPEEAEEGEEEEAERGPGAEGPPLELHPGDPAPGPAEDPKGDGEAGRWEPSLSRKTATFKSRAPKKKYVEEHGAGSSGVAGAPEERVRTPEEASGLGVPPRPPTSTRSSSTDTASEHSADLEDEPAEACGPGPWPPGSTSGSYDLRQLRSQRVLARRGDGLFLPAVVRQVRRSQDLGVQFPGDRALTFYEGVPGAGVDVVLDATPPPGALVVGTAVCTCVEPGVAAYREGVVVEVATKPAAYKVRLSPGPSSQPGLPGSLPQPPQPLHREPEEAVWVARSSLRLLRPPWEPETMLRKPPTGPEEEQAEPGATLPPCPAALDPKQPEDAEVSKISFGGNLGTHCEEGEEKHPPALGTPALLPLPPPQLLSPPPKSPAFVGPGRPGEQPSPCQEGSQGGSRSSSVASLEKGTAPAARARTPLTAAQQKYKKGDVVCTPSGIRKKFNGKQWRRLCSRDGCMKESQRRGYCSRHLSMRTKEMEGLADSGPGGAGRPAAVAAREGSTEFDWGDETSRDSEASSVAARGDSRPRLVAPADLSRFEFDECEAAVMLVSLGSSRSGTPSFSPVSTQSPFSPAPSPSPSPLFGFRPANFSPINASPVIQRTAVRSRHLSASTPKAGVLTPPDLGPHPPPPAPRERHSSGILPTFQTNLTFTVPISPGRRKTELLPHPGALGAPGAGGGGAAPDFPKSDSLDSGVDSVSHTPTPSTPAGFRAVSPAVPFSRSRQPSPLLLLPPPAGLTSDPGPSVRRVPAVQRDSPVIVRNPDVPLPSKFPGEVGTAGEVRAGGPGRGCRETPVPPGVASGKPGLPPPLPAPVPITVPPAAPTAVAQPMPAFGLASSPFQPVAFHPSPAALLPVLVPSSYTSHPAPKKEVIMGRPGTVWTNVEPRSVAVFPWHSLVPFLAPSQPDPSVQPSEAQQPASHPVASNQSKEPAESAAVAHERPPGGTGSADPERPPGATCPESPGPGPPHPLGVVESGKGPPPTTEEEASGPPGEPRLDSETESDHDDAFLSIMSPEIQLPLPPGKRRTQSLSALPKERDSSSEKDGRSPNKREKDHIRRPMNAFMIFSKRHRALVHQRHPNQDNRTVSKILGEWWYALGPKEKQKYHDLAFQVKEAHFKAHPDWKWCNKDRKKSSSEAKPTSLGLAGGHKETRERSMSETGTAAAPGVSSELLSVAAQTLLSSDTKAPGSSSCGAERLHTVGGPGSARPRAFSHSGVHSLDGGEVDSQALQELTQMVSGPASYSGPKPSTQYGAPGPFAAPGEGGALAATGRPPLLPTRASRSQRAASEDMTSDEERMVICEEEGDDDVIADDGFGTTDIDLKCKERVTDSESGDSSGEDPEGNKGFGRKVFSPVIRSSFTHCRPPLDPEPPGPPDPPVAFGKGYGSAPSSSASSPASSSASAATSFSLGSGTFKAQESGQGSTAGPLRPPPPGAGGPATPSKATRFLPMDPATFRRKRPESVGGLEPPGPSVIAAPPSGGGNILQTLVLPPNKEEQEGGGARVPSAPAPSLAYGAPAAPLSRPAATMVTNVVRPVSSTPVPIASKPFPTSGRAEASPNDTAGARTEMGTGSRVPGGSPLGVSLVYSDKKSAAATSPAPHLVAGPLLGTVGKAPATVTNLLVGTPGYGAPAPPAVQFIAQGAPGGGTTAGSGAGAGSGPNGPVPLGILQPGALGKAGGITQVQYILPTLPQQLQVAPAPAPAPGTKAAAPSGPAPTTSIRFTLPPGTSTNGKVLAATAPTPGIPILQSVPSAPPPKAQSVSPVQAPPPGGSAQLLPGKVLVPLAAPSMSVRGGGAGQPLPLVSPPFSVPVQNGAQPPSKIIQLTPVPVSTPSGLVPPLSPATLPGPTSQPQKVLLPSSTRITYVQSAGGHALPLGTSPASSQAGTVTSYGPTSSVALGFTSLGPSGPAFVQPLLSAGQAPLLAPGQVGVSPVPSPQLPPACAAPGGPVITAFYSGSPAPTSSAPLAQPSQAPPSLVYTVATSTTPPAATILPKGPPAPATATPAPTSPFPSATAGSMTYSLVAPKAQRPSPKAPQKVKAAIASIPVGSFEAGASGRPGPAPRQPLEPGPVREPTAPESELEGQPTPPAPPPLPETWTPTARSSPPLPPPAEERTSAKGPETMASKFPSSSSDWRVPGQGLENRGEPPTPPSPAPAPAVAPGGSSESSSGRAAGDTPERKEAAGTGKKVKVRPPPLKKTFDSVDNRVLSEVDFEERFAELPEFRPEEVLPSPTLQSLATSPRAILGSYRKKRKNSTDLDSAPEDPTSPKRKMRRRSSCSSEPNTPKSAKCEGDIFTFDRTGTEAEDVLGELEYDKVPYSSLRRTLDQRRALVMQLFQDHGFFPSAQATAAFQARYADIFPSKVCLQLKIREVRQKIMQAATPTEQPPGAEAPLPVPPPTGTAAAPAPTPSPAGGPDPTSPSSDSGTAQAAPPLPPPPESGPGQPGWEGAPQPSPPPPGPSTAATGR.

Disordered stretches follow at residues 1–197 (MKPM…SGSY), 300–325 (LSPGPSSQPGLPGSLPQPPQPLHREP), 342–483 (PWEP…KYKK), 531–579 (EMEG…RGDS), 608–640 (SSRSGTPSFSPVSTQSPFSPAPSPSPSPLFGFR), and 658–767 (VRSR…FRAV). The span at 57–67 (EEAEEGEEEEA) shows a compositional bias: acidic residues. Positions 91–101 (EDPKGDGEAGR) are enriched in basic and acidic residues. Composition is skewed to low complexity over residues 158–167 (TSTRSSSTDT) and 300–313 (LSPGPSSQPGLPGS). Basic and acidic residues predominate over residues 396–405 (HCEEGEEKHP). Residues 414–428 (LPLPPPQLLSPPPKS) show a composition bias toward pro residues. Low complexity predominate over residues 451–477 (GSRSSSVASLEKGTAPAARARTPLTAA). Residues 608–619 (SSRSGTPSFSPV) are compositionally biased toward polar residues. A compositionally biased stretch (pro residues) spans 677–686 (DLGPHPPPPA). A compositionally biased stretch (polar residues) spans 698–707 (TFQTNLTFTV). Over residues 726–735 (GAPGAGGGGA) the composition is skewed to gly residues. Phosphoserine occurs at positions 776 and 780. 7 disordered regions span residues 812–842 (IVRNPDVPLPSKFPGEVGTAGEVRAGGPGRG), 955–1110 (PSQP…DHIR), 1179–1220 (CNKD…APGV), 1235–1274 (SDTKAPGSSSCGAERLHTVGGPGSARPRAFSHSGVHSLDG), 1290–1347 (SGPA…TSDE), 1379–1539 (RVTD…ILQT), and 1595–1628 (IASKPFPTSGRAEASPNDTAGARTEMGTGSRVPG). An interaction with ATXN1 region spans residues 937–955 (EPRSVAVFPWHSLVPFLAP). Over residues 959–981 (DPSVQPSEAQQPASHPVASNQSK) the composition is skewed to polar residues. Ser-1055 and Ser-1082 each carry phosphoserine. Basic and acidic residues-rich tracts occupy residues 1087-1110 (PKERDSSSEKDGRSPNKREKDHIR), 1179-1188 (CNKDRKKSSS), and 1200-1209 (GHKETRERSM). Arg-1099 carries the omega-N-methylarginine modification. The segment at residues 1109–1177 (IRRPMNAFMI…AHFKAHPDWK (69 aa)) is a DNA-binding region (HMG box). A Phosphoserine modification is found at Ser-1186. A compositionally biased stretch (polar residues) spans 1235 to 1245 (SDTKAPGSSSC). Position 1271 is a phosphoserine (Ser-1271). Positions 1305-1323 (GAPGPFAAPGEGGALAATG) are enriched in low complexity. Phosphoserine is present on residues Ser-1340, Ser-1345, and Ser-1405. Residues 1418-1430 (PLDPEPPGPPDPP) are compositionally biased toward pro residues. Positions 1439–1456 (SAPSSSASSPASSSASAA) are enriched in low complexity. Residues 1457–1474 (TSFSLGSGTFKAQESGQG) show a composition bias toward polar residues. Residues Ser-1609, Ser-1630, and Ser-1648 each carry the phosphoserine modification. Arg-1772 is subject to Asymmetric dimethylarginine. A disordered region spans residues 1799–1818 (QSVPSAPPPKAQSVSPVQAP). At Arg-1843 the chain carries Omega-N-methylarginine. Disordered stretches follow at residues 2039–2064 (AATILPKGPPAPATATPAPTSPFPSA), 2100–2342 (SFEA…AKCE), and 2430–2517 (AATP…ATGR). Over residues 2051–2064 (ATATPAPTSPFPSA) the composition is skewed to low complexity. Composition is skewed to pro residues over residues 2110–2119 (GPAPRQPLEP) and 2136–2145 (PTPPAPPPLP). Positions 2146 to 2155 (ETWTPTARSS) are enriched in low complexity. At Lys-2177 the chain carries N6-acetyllysine. Residues 2198 to 2209 (PPTPPSPAPAPA) show a composition bias toward pro residues. Thr-2200 carries the post-translational modification Phosphothreonine. Ser-2203 is subject to Phosphoserine. Positions 2210–2225 (VAPGGSSESSSGRAAG) are enriched in low complexity. Over residues 2249–2278 (KTFDSVDNRVLSEVDFEERFAELPEFRPEE) the composition is skewed to basic and acidic residues. A phosphoserine mark is found at Ser-2260, Ser-2282, Ser-2287, Ser-2291, Ser-2298, and Ser-2306. Residue Thr-2307 is modified to Phosphothreonine. Phosphoserine is present on residues Ser-2311 and Ser-2318. Pro residues predominate over residues 2457–2469 (APTPSPAGGPDPT). Ser-2504 bears the Phosphoserine mark.

In terms of assembly, found in a complex with ATXN1 and ATXN1L. Interacts with ATXN1. Expressed in fetal brain.

Its subcellular location is the nucleus. Functionally, transcriptional repressor which plays a role in development of the central nervous system (CNS). In concert with ATXN1 and ATXN1L, involved in brain development. This Homo sapiens (Human) protein is Protein capicua homolog (CIC).